The primary structure comprises 142 residues: MKTFSLKLNDIKRNWFYVDATNKILGRFASAISIRLRGKHKIEYTPHLDTGDYIIVLNASKILVTGQKKINKVYYHHTGYIGGIKQLRFEEIMLKNPAKVIEIAVKGMLPKGSLGRSMFKKLKVFSNENHDHIAQCPQFLNI.

Belongs to the universal ribosomal protein uL13 family. As to quaternary structure, part of the 50S ribosomal subunit.

Functionally, this protein is one of the early assembly proteins of the 50S ribosomal subunit, although it is not seen to bind rRNA by itself. It is important during the early stages of 50S assembly. This chain is Large ribosomal subunit protein uL13, found in Buchnera aphidicola subsp. Schizaphis graminum (strain Sg).